The following is a 388-amino-acid chain: MSSKRMDSGSKDIISNLPDALLCHVLSFLPTTEAASTSVLAKRWRFLLAFVPNLDLDNMIYDRPKMGRRKRLELRKSFKLFVDRVMALQGNAPLKKFSLRCKIGSDPSRVNGWVLKVLDRGVEELDLYIASEYEYPLPPKVLMTKTLVSLKVSGTDEFTIDVGEFFLPKLKTLHLSAISFGDEGGPPFAKLISACHALEELVMIKMMWDYWEFCSVSSPSLKRVSIDCENIDENPKSVSFDTPNLVYLEFTDTVAVKYPKVNFDSLVEASIGLRMTPDQVFDARDLVNRHHGYKRCKGANAADFMMGVCNVKTMYLSSEALEVLTFCCKKAIPVFNNLIHLTVETDERVDWESLPILLKNCPNLETLIFEVPSHILFLHDLTHFFSNT.

An F-box domain is found at 11-64; the sequence is KDIISNLPDALLCHVLSFLPTTEAASTSVLAKRWRFLLAFVPNLDLDNMIYDRP. LRR repeat units follow at residues 151–177, 180–205, 228–252, 313–345, and 346–371; these read KVSG…HLSA, FGDE…VMIK, CENI…EFTD, TMYL…TVET, and DERV…IFEV.

In Arabidopsis thaliana (Mouse-ear cress), this protein is F-box/LRR-repeat protein At3g59190.